The sequence spans 708 residues: Leukotoxin translocation ATP-binding protein LktB (708 aa).

Positions 1–126 constitute a Peptidase C39 domain; sequence MEVNHQSNDL…SCYQGKIILV (126 aa). Residues 155–437 enclose the ABC transmembrane type-1 domain; sequence FLETLLVSIF…LAQLWQDFTQ (283 aa). 5 consecutive transmembrane segments (helical) span residues 159 to 179, 192 to 212, 270 to 290, 296 to 316, and 389 to 409; these read LLVS…FQVV, LNII…LSGL, ALTS…MWYY, LVIL…SPIL, and VMVI…LSIG. The ABC transporter domain maps to 469 to 704; that stretch reads IAFKNIRFRY…NNGLYSYLHQ (236 aa). 503–510 is a binding site for ATP; that stretch reads GRSGSGKS.

It belongs to the ABC transporter superfamily. Protein-1 exporter (TC 3.A.1.109) family. Homodimer.

The protein resides in the cell inner membrane. It carries out the reaction ATP + H2O + proteinSide 1 = ADP + phosphate + proteinSide 2.. In terms of biological role, part of the ABC transporter complex LktBD involved in leukotoxin export. Transmembrane domains (TMD) form a pore in the inner membrane and the ATP-binding domain (NBD) is responsible for energy generation. The sequence is that of Leukotoxin translocation ATP-binding protein LktB (lktB) from Pasteurella haemolytica-like sp. (strain 5943B).